The primary structure comprises 208 residues: MTKGILGKKVGMTQIFTESGEFIPVTVIEATPNVVLQVKTVETDGYEAVQVGFDDKREVLSNKPAKGHVAKANTAPKRFIREFKNIEGLEVGAELSVEQFEAGDVVDVTGTSKGKGFQGVIKRHGQSRGPMAHGSRYHRRPGSMGPVAPNRVFKNKRLAGRMGGNRVTVQNLEIVQVIPEKNVVLIKGNVPGAKKSLITIKSAVKAAK.

A disordered region spans residues Gly116–Ala148.

Belongs to the universal ribosomal protein uL3 family. Part of the 50S ribosomal subunit. Forms a cluster with proteins L14 and L19.

One of the primary rRNA binding proteins, it binds directly near the 3'-end of the 23S rRNA, where it nucleates assembly of the 50S subunit. This chain is Large ribosomal subunit protein uL3, found in Streptococcus agalactiae serotype Ia (strain ATCC 27591 / A909 / CDC SS700).